Reading from the N-terminus, the 753-residue chain is Dynein regulatory complex protein 1 (753 aa).

Disordered stretches follow at residues 1–33 (MNPS…DNPQ) and 55–76 (LGEY…YKQK). Residues 100–388 (AADVREIHRR…QFKDLQKALR (289 aa)) are a coiled coil. The segment covering 587–597 (SQTDKGSMVSK) has biased composition (polar residues). The disordered stretch occupies residues 587–628 (SQTDKGSMVSKSDQEPTEQEDEQEGDNASLSSRELEEQEDLS). Residues 601-611 (EPTEQEDEQEG) are compositionally biased toward acidic residues. Positions 703–739 (VLTERAKLLMENESLEQQNAEMQSLLQQYLQAKVNTE) form a coiled coil.

Belongs to the DRC1 family. Component of the nexin-dynein regulatory complex (N-DRC). Interacts with CCDC65/DRC2, DRC3, GAS8/DRC4 and TCTE1/DRC5.

The protein localises to the cytoplasm. Its subcellular location is the cytoskeleton. It is found in the cilium axoneme. The protein resides in the flagellum axoneme. Functionally, component of the nexin-dynein regulatory complex (N-DRC) a key regulator of ciliary/flagellar motility which maintains the alignment and integrity of the distal axoneme and regulates microtubule sliding in motile axonemes. Plays a critical role in the assembly of N-DRC and also stabilizes the assembly of multiple inner dynein arms and radial spokes. Coassembles with CCDC65/DRC2 to form a central scaffold needed for assembly of the N-DRC and its attachment to the outer doublet microtubules. The sequence is that of Dynein regulatory complex protein 1 (Drc1) from Mus musculus (Mouse).